The chain runs to 355 residues: Tetraacyldisaccharide 4'-kinase (355 aa).

Thr54 to Thr61 contributes to the ATP binding site.

This sequence belongs to the LpxK family.

It carries out the reaction a lipid A disaccharide + ATP = a lipid IVA + ADP + H(+). It functions in the pathway glycolipid biosynthesis; lipid IV(A) biosynthesis; lipid IV(A) from (3R)-3-hydroxytetradecanoyl-[acyl-carrier-protein] and UDP-N-acetyl-alpha-D-glucosamine: step 6/6. Functionally, transfers the gamma-phosphate of ATP to the 4'-position of a tetraacyldisaccharide 1-phosphate intermediate (termed DS-1-P) to form tetraacyldisaccharide 1,4'-bis-phosphate (lipid IVA). This chain is Tetraacyldisaccharide 4'-kinase, found in Rhizobium rhizogenes (strain K84 / ATCC BAA-868) (Agrobacterium radiobacter).